The sequence spans 81 residues: Omega-conotoxin-like 3 (81 aa).

The N-terminal stretch at 1–22 is a signal peptide; it reads MKLTCMMIVAVLFLTASIFITA. Positions 23–51 are excised as a propeptide; the sequence is DNSRNGIENLPRMRRHEMKKPKASKLNKR. Cystine bridges form between Cys53-Cys71, Cys60-Cys75, and Cys70-Cys79.

It belongs to the conotoxin O1 superfamily. In terms of tissue distribution, expressed by the venom duct.

The protein resides in the secreted. Omega-conotoxins act at presynaptic membranes, they bind and block voltage-gated calcium channels (Cav). The protein is Omega-conotoxin-like 3 of Conus imperialis (Imperial cone).